Reading from the N-terminus, the 160-residue chain is Transcriptional repressor NrdR (160 aa).

Residues 1 to 11 are compositionally biased toward polar residues; that stretch reads MRCPNCNSLDT. Residues 1 to 20 form a disordered region; it reads MRCPNCNSLDTQVKDSRPTE. The segment at 3 to 34 is a zinc-finger region; the sequence is CPNCNSLDTQVKDSRPTEDSSVIRRRRVCVAC. The 91-residue stretch at 49-139 folds into the ATP-cone domain; the sequence is LTVIKRNGRR…VYRNFREAKD (91 aa).

The protein belongs to the NrdR family. The cofactor is Zn(2+).

Functionally, negatively regulates transcription of bacterial ribonucleotide reductase nrd genes and operons by binding to NrdR-boxes. This is Transcriptional repressor NrdR from Bradyrhizobium diazoefficiens (strain JCM 10833 / BCRC 13528 / IAM 13628 / NBRC 14792 / USDA 110).